A 155-amino-acid chain; its full sequence is Endoribonuclease YbeY (155 aa).

Zn(2+) is bound by residues His113, His117, and His123.

The protein belongs to the endoribonuclease YbeY family. Zn(2+) is required as a cofactor.

The protein localises to the cytoplasm. Its function is as follows. Single strand-specific metallo-endoribonuclease involved in late-stage 70S ribosome quality control and in maturation of the 3' terminus of the 16S rRNA. The chain is Endoribonuclease YbeY from Ureaplasma urealyticum serovar 10 (strain ATCC 33699 / Western).